A 428-amino-acid polypeptide reads, in one-letter code: Chaperone SurA (428 aa).

A signal peptide spans 1–13 (MLGALLLSGAVHA). 2 consecutive PpiC domains span residues 164-265 (SEEF…KLLE) and 276-375 (RDEV…EVLG). Residues 211–230 (TSSSSENALEGGDMGWRKAA) are disordered.

The protein resides in the periplasm. The enzyme catalyses [protein]-peptidylproline (omega=180) = [protein]-peptidylproline (omega=0). Its function is as follows. Chaperone involved in the correct folding and assembly of outer membrane proteins. Recognizes specific patterns of aromatic residues and the orientation of their side chains, which are found more frequently in integral outer membrane proteins. May act in both early periplasmic and late outer membrane-associated steps of protein maturation. The polypeptide is Chaperone SurA (Pseudomonas syringae pv. syringae (strain B728a)).